Consider the following 175-residue polypeptide: ATP-dependent protease subunit HslV (175 aa).

The active site involves Thr-2. Residues Gly-157, Cys-160, and Thr-163 each coordinate Na(+).

It belongs to the peptidase T1B family. HslV subfamily. A double ring-shaped homohexamer of HslV is capped on each side by a ring-shaped HslU homohexamer. The assembly of the HslU/HslV complex is dependent on binding of ATP.

It localises to the cytoplasm. It catalyses the reaction ATP-dependent cleavage of peptide bonds with broad specificity.. Allosterically activated by HslU binding. Its function is as follows. Protease subunit of a proteasome-like degradation complex believed to be a general protein degrading machinery. This chain is ATP-dependent protease subunit HslV, found in Photobacterium profundum (strain SS9).